Reading from the N-terminus, the 25-residue chain is Small ribosomal subunit protein eS32 (25 aa).

The interval 1-25 (MREKWKKKRSRRLRRKRRKMRARSK) is disordered.

It belongs to the eukaryotic ribosomal protein eS32 family. Component of the large ribosomal subunit.

In Agaricus bisporus (White button mushroom), this protein is Small ribosomal subunit protein eS32 (rpl41).